A 437-amino-acid polypeptide reads, in one-letter code: Glutamyl-tRNA reductase (437 aa).

Residues 49-52 (TCNR), serine 109, 114-116 (ETQ), and glutamine 120 contribute to the substrate site. The active-site Nucleophile is the cysteine 50. Residue 189–194 (GAGEMS) participates in NADP(+) binding.

It belongs to the glutamyl-tRNA reductase family. As to quaternary structure, homodimer.

It catalyses the reaction (S)-4-amino-5-oxopentanoate + tRNA(Glu) + NADP(+) = L-glutamyl-tRNA(Glu) + NADPH + H(+). It participates in porphyrin-containing compound metabolism; protoporphyrin-IX biosynthesis; 5-aminolevulinate from L-glutamyl-tRNA(Glu): step 1/2. Functionally, catalyzes the NADPH-dependent reduction of glutamyl-tRNA(Glu) to glutamate 1-semialdehyde (GSA). The sequence is that of Glutamyl-tRNA reductase from Listeria welshimeri serovar 6b (strain ATCC 35897 / DSM 20650 / CCUG 15529 / CIP 8149 / NCTC 11857 / SLCC 5334 / V8).